A 215-amino-acid polypeptide reads, in one-letter code: Cytochrome b6 (215 aa).

The chain crosses the membrane as a helical span at residues 32 to 52 (IFYCLGGITLTCFLVQVASGF). Position 35 (Cys-35) interacts with heme c. Positions 86 and 100 each coordinate heme b. 3 consecutive transmembrane segments (helical) span residues 90–110 (ASMMVLMMILHVFRVYLTGGF), 116–136 (LTWVTGVILAVLTVSFGVTGY), and 186–206 (LHTFVLPLLTAVLMLMHFLMI). The heme b site is built by His-187 and His-202.

Belongs to the cytochrome b family. PetB subfamily. The 4 large subunits of the cytochrome b6-f complex are cytochrome b6, subunit IV (17 kDa polypeptide, PetD), cytochrome f and the Rieske protein, while the 4 small subunits are PetG, PetL, PetM and PetN. The complex functions as a dimer. The cofactor is heme b. Heme c is required as a cofactor.

The protein resides in the plastid. It is found in the chloroplast thylakoid membrane. Component of the cytochrome b6-f complex, which mediates electron transfer between photosystem II (PSII) and photosystem I (PSI), cyclic electron flow around PSI, and state transitions. This Anthoceros angustus (Hornwort) protein is Cytochrome b6.